The sequence spans 84 residues: GTP cyclohydrolase 1 feedback regulatory protein (84 aa).

This sequence belongs to the GFRP family. Homopentamer. Forms a complex with GCH1 where a GCH1 homodecamer is sandwiched by two GFRP homopentamers.

Its subcellular location is the nucleus. It is found in the nucleus membrane. The protein resides in the cytoplasm. It localises to the cytosol. Its function is as follows. Mediates tetrahydrobiopterin inhibition of GTP cyclohydrolase 1. This Xenopus tropicalis (Western clawed frog) protein is GTP cyclohydrolase 1 feedback regulatory protein (gchfr).